The primary structure comprises 436 residues: Trigger factor (436 aa).

The PPIase FKBP-type domain occupies 163–248; sequence DDRIVLDFAG…VKEVAEAVLP (86 aa).

Belongs to the FKBP-type PPIase family. Tig subfamily.

Its subcellular location is the cytoplasm. It catalyses the reaction [protein]-peptidylproline (omega=180) = [protein]-peptidylproline (omega=0). In terms of biological role, involved in protein export. Acts as a chaperone by maintaining the newly synthesized protein in an open conformation. Functions as a peptidyl-prolyl cis-trans isomerase. This is Trigger factor from Bordetella avium (strain 197N).